We begin with the raw amino-acid sequence, 309 residues long: Serpentine receptor class gamma-47 (309 aa).

Helical transmembrane passes span 22–42 (IVQMFYGTITVVFMLILLFLF), 140–160 (FKLYYVILCGISIFFTSVLPL), 190–210 (IYSSVYFIILLLVGIISIFYI), 230–250 (LITLVYGFLYSGILLWSILMA), and 272–292 (ISSDLITLSLPYILLIFDVGI).

It belongs to the nematode receptor-like protein srg family.

The protein resides in the membrane. In Caenorhabditis elegans, this protein is Serpentine receptor class gamma-47 (srg-47).